A 246-amino-acid polypeptide reads, in one-letter code: Probable transcriptional regulatory protein CLB_3102 (246 aa).

Belongs to the TACO1 family.

The protein localises to the cytoplasm. This Clostridium botulinum (strain ATCC 19397 / Type A) protein is Probable transcriptional regulatory protein CLB_3102.